The following is a 93-amino-acid chain: CRISPR-associated endoribonuclease Cas2 1 (93 aa).

Mg(2+) is bound at residue D8.

It belongs to the CRISPR-associated endoribonuclease Cas2 protein family. Homodimer, forms a heterotetramer with a Cas1 homodimer. Mg(2+) serves as cofactor.

In terms of biological role, CRISPR (clustered regularly interspaced short palindromic repeat), is an adaptive immune system that provides protection against mobile genetic elements (viruses, transposable elements and conjugative plasmids). CRISPR clusters contain sequences complementary to antecedent mobile elements and target invading nucleic acids. CRISPR clusters are transcribed and processed into CRISPR RNA (crRNA). Functions as a ssRNA-specific endoribonuclease. Involved in the integration of spacer DNA into the CRISPR cassette. The chain is CRISPR-associated endoribonuclease Cas2 1 from Chloroflexus aurantiacus (strain ATCC 29366 / DSM 635 / J-10-fl).